The sequence spans 484 residues: Protein nucleotidyltransferase YdiU (484 aa).

ATP is bound by residues Gly-81, Gly-83, Arg-84, Lys-103, Asp-115, Gly-116, Arg-166, and Arg-173. Asp-244 (proton acceptor) is an active-site residue. Positions 245 and 254 each coordinate Mg(2+). ATP is bound at residue Asp-254.

Belongs to the SELO family. Mg(2+) is required as a cofactor. The cofactor is Mn(2+).

The enzyme catalyses L-seryl-[protein] + ATP = 3-O-(5'-adenylyl)-L-seryl-[protein] + diphosphate. It carries out the reaction L-threonyl-[protein] + ATP = 3-O-(5'-adenylyl)-L-threonyl-[protein] + diphosphate. It catalyses the reaction L-tyrosyl-[protein] + ATP = O-(5'-adenylyl)-L-tyrosyl-[protein] + diphosphate. The catalysed reaction is L-histidyl-[protein] + UTP = N(tele)-(5'-uridylyl)-L-histidyl-[protein] + diphosphate. The enzyme catalyses L-seryl-[protein] + UTP = O-(5'-uridylyl)-L-seryl-[protein] + diphosphate. It carries out the reaction L-tyrosyl-[protein] + UTP = O-(5'-uridylyl)-L-tyrosyl-[protein] + diphosphate. Its function is as follows. Nucleotidyltransferase involved in the post-translational modification of proteins. It can catalyze the addition of adenosine monophosphate (AMP) or uridine monophosphate (UMP) to a protein, resulting in modifications known as AMPylation and UMPylation. The polypeptide is Protein nucleotidyltransferase YdiU (Shewanella baltica (strain OS155 / ATCC BAA-1091)).